We begin with the raw amino-acid sequence, 606 residues long: Fructan 6-exohydrolase (606 aa).

An N-terminal signal peptide occupies residues 1–21 (MAPNNGSWLVLSISMMLLSHG). An N-linked (GlcNAc...) asparagine glycan is attached at Asn-5. Residue Asp-70 is part of the active site. Residues Asn-110, Asn-164, Asn-193, Asn-237, and Asn-346 are each glycosylated (N-linked (GlcNAc...) asparagine). Cys-445 and Cys-491 are oxidised to a cystine. 4 N-linked (GlcNAc...) asparagine glycosylation sites follow: Asn-564, Asn-585, Asn-590, and Asn-593.

Belongs to the glycosyl hydrolase 32 family.

The catalysed reaction is Hydrolysis of terminal, non-reducing (2-&gt;6)-linked beta-D-fructofuranose residues in fructans.. Its activity is regulated as follows. Not inhibited by sucrose. Its function is as follows. Hydrolyzes levan-type beta-(2-&gt;6)-linked fructans to fructose, but not inulin-type beta-(2-&gt;1)-linked fructans. This is Fructan 6-exohydrolase from Beta vulgaris (Sugar beet).